Consider the following 566-residue polypeptide: Transcription factor opdL (566 aa).

The segment at residues cysteine 15–cysteine 45 is a DNA-binding region (zn(2)-C6 fungal-type).

Its subcellular location is the nucleus. Transcription factor; part of the gene cluster that mediates the biosynthesis of oxopyrrolidines, polyketide-amino acid hybrid compounds with feature structures of tetramic acid. In Penicillium oxalicum (strain 114-2 / CGMCC 5302) (Penicillium decumbens), this protein is Transcription factor opdL.